The following is a 155-amino-acid chain: DNA-binding protein inhibitor ID-1 (155 aa).

A bHLH domain is found at 53-105; it reads LPALLDEQQVNVLLYDMNGCYSRLKELVPTLPQNRKVSKVEILQHVIDYIRDL. Positions 98-111 match the Nuclear export signal motif; that stretch reads VIDYIRDLQLELNS.

In terms of assembly, heterodimer with other HLH proteins. Interacts with COPS5, IFI204, GATA4 and NKX2-5. Interacts with CLOCK and BMAL1.

Its subcellular location is the cytoplasm. It localises to the nucleus. In terms of biological role, transcriptional regulator (lacking a basic DNA binding domain) which negatively regulates the basic helix-loop-helix (bHLH) transcription factors by forming heterodimers and inhibiting their DNA binding and transcriptional activity. Implicated in regulating a variety of cellular processes, including cellular growth, senescence, differentiation, apoptosis, angiogenesis, and neoplastic transformation. Inhibits skeletal muscle and cardiac myocyte differentiation. Regulates the circadian clock by repressing the transcriptional activator activity of the CLOCK-BMAL1 heterodimer. This Homo sapiens (Human) protein is DNA-binding protein inhibitor ID-1 (ID1).